The sequence spans 182 residues: Inner membrane-spanning protein YciB (182 aa).

5 consecutive transmembrane segments (helical) span residues 22–42, 50–70, 72–92, 118–138, and 148–168; these read IYIASGALIAATALQLIVTYA, MHLITFVMVTFFGTLTLIFHD, AFIKWKVTVVYALFAIALAVS, VTWYWVSFFVACGLVNIYVAF, and FKVFGLTALTLINTVITVVYL.

This sequence belongs to the YciB family.

It localises to the cell inner membrane. Plays a role in cell envelope biogenesis, maintenance of cell envelope integrity and membrane homeostasis. This is Inner membrane-spanning protein YciB from Shewanella woodyi (strain ATCC 51908 / MS32).